The primary structure comprises 267 residues: B3 domain-containing protein Os02g0455800 (267 aa).

Positions 30-131 (EKFLMPSDLC…RLFICCRLGT (102 aa)) form a DNA-binding region, TF-B3. Residues 172–221 (QARLHDGNQDGGGAPSRHVPSSGRRVEAQLSRVSSRRQRRTMKHSIPEPT) are disordered. Residues 205-214 (SSRRQRRTMK) show a composition bias toward basic residues.

It localises to the nucleus. The polypeptide is B3 domain-containing protein Os02g0455800 (Oryza sativa subsp. japonica (Rice)).